Here is a 237-residue protein sequence, read N- to C-terminus: UPF0280 protein Mthe_1297 (237 aa).

Belongs to the UPF0280 family.

In Methanothrix thermoacetophila (strain DSM 6194 / JCM 14653 / NBRC 101360 / PT) (Methanosaeta thermophila), this protein is UPF0280 protein Mthe_1297.